A 207-amino-acid polypeptide reads, in one-letter code: Ribosomal RNA small subunit methyltransferase G (207 aa).

Residues Gly-76, Gln-81, 127-128 (VE), and Arg-141 contribute to the S-adenosyl-L-methionine site.

The protein belongs to the methyltransferase superfamily. RNA methyltransferase RsmG family.

It localises to the cytoplasm. It catalyses the reaction guanosine(527) in 16S rRNA + S-adenosyl-L-methionine = N(7)-methylguanosine(527) in 16S rRNA + S-adenosyl-L-homocysteine. In terms of biological role, specifically methylates the N7 position of guanine in position 527 of 16S rRNA. This is Ribosomal RNA small subunit methyltransferase G from Neisseria meningitidis serogroup C / serotype 2a (strain ATCC 700532 / DSM 15464 / FAM18).